Here is a 426-residue protein sequence, read N- to C-terminus: Histidine--tRNA ligase (426 aa).

This sequence belongs to the class-II aminoacyl-tRNA synthetase family. In terms of assembly, homodimer.

Its subcellular location is the cytoplasm. It carries out the reaction tRNA(His) + L-histidine + ATP = L-histidyl-tRNA(His) + AMP + diphosphate + H(+). The sequence is that of Histidine--tRNA ligase from Legionella pneumophila (strain Lens).